The following is a 218-amino-acid chain: Heart- and neural crest derivatives-expressed protein 1 (218 aa).

Disordered stretches follow at residues 1–23, 56–112, and 172–203; these read MNLVGSYAHHHHHHHHHHPHPAH, APDF…RTES, and ADGGRESKRKRELQQHEGFPPALGPGEKRIKG. The segment covering 8–21 has biased composition (basic residues); the sequence is AHHHHHHHHHHPHP. Over residues 68 to 92 the composition is skewed to low complexity; that stretch reads AAAAAASYGPDARPGQSPGRLEALG. A compositionally biased stretch (basic residues) spans 95–107; the sequence is LGRRKGSGPKKER. In terms of domain architecture, bHLH spans 97-149; sequence RRKGSGPKKERRRTESINSAFAELRECIPNVPADTKLSKIKTLRLATSYIAYL. T110 is subject to Phosphothreonine; by PLK4. Phosphoserine; by PLK4 is present on S112.

As to quaternary structure, efficient DNA binding requires dimerization with another bHLH protein. Forms homodimers and heterodimers with TCF3 gene products E12 and E47, HAND2 and HEY1, HEY2 and HEYL (hairy-related transcription factors). Interacts with MDFIC. Interacts with SOX15; the interaction enhances HAND1-induced differentiation of trophoblast giant cells. In terms of processing, phosphorylation by PLK4 disrupts the interaction with MDFIC and leads to translocation into the nucleoplasm, allowing dimerization and transcription factor activity.

It localises to the nucleus. It is found in the nucleoplasm. The protein resides in the nucleolus. Transcription factor that plays an essential role in both trophoblast giant cell differentiation and in cardiac morphogenesis. Binds the DNA sequence 5'-NRTCTG-3' (non-canonical E-box). Acts as a transcriptional repressor of SOX15. In the adult, could be required for ongoing expression of cardiac-specific genes. The chain is Heart- and neural crest derivatives-expressed protein 1 (HAND1) from Bos taurus (Bovine).